The following is a 410-amino-acid chain: Chitinase-3-like protein 1 (410 aa).

Positions 1 to 48 are cleaved as a signal peptide; that stretch reads MGVKAAQTGIWASQGQSIRVVGFQAQTAHRAICLLGFVVLVLLQCCSA. One can recognise a GH18 domain in the interval 49-410; sequence YKLVCYYTSW…NAIKDALAAT (362 aa). Cys53 and Cys78 are oxidised to a cystine. Asn87 carries N-linked (GlcNAc...) asparagine glycosylation. Chitin-binding positions include 97–98, 124–127, Tyr168, 231–234, and Arg290; these read EW, GGWN, and MTYD. An intrachain disulfide couples Cys327 to Cys391. Positions 351–365 are important for AKT1 activation and IL8 production; sequence QWVGYDDQESVKSKV. Trp379 contributes to the chitin binding site.

It belongs to the glycosyl hydrolase 18 family. In terms of assembly, monomer.

The protein resides in the secreted. Its subcellular location is the extracellular space. The protein localises to the cytoplasm. It localises to the perinuclear region. It is found in the endoplasmic reticulum. Carbohydrate-binding lectin with a preference for chitin. Has no chitinase activity. May play a role in tissue remodeling and in the capacity of cells to respond to and cope with changes in their environment. Plays a role in T-helper cell type 2 (Th2) inflammatory response and IL-13-induced inflammation, regulating allergen sensitization, inflammatory cell apoptosis, dendritic cell accumulation and M2 macrophage differentiation. Facilitates invasion of pathogenic enteric bacteria into colonic mucosa and lymphoid organs. Mediates activation of AKT1 signaling pathway and subsequent IL8 production in colonic epithelial cells. Regulates antibacterial responses in lung by contributing to macrophage bacterial killing, controlling bacterial dissemination and augmenting host tolerance. Also regulates hyperoxia-induced injury, inflammation and epithelial apoptosis in lung. The sequence is that of Chitinase-3-like protein 1 (CHI3L1) from Pongo abelii (Sumatran orangutan).